A 695-amino-acid polypeptide reads, in one-letter code: Elongation factor G (695 aa).

A tr-type G domain is found at 10–285 (DKTRNIGIMA…GVVDYLPSPL (276 aa)). GTP is bound by residues 19-26 (AHIDAGKT), 83-87 (DTPGH), and 137-140 (NKMD).

The protein belongs to the TRAFAC class translation factor GTPase superfamily. Classic translation factor GTPase family. EF-G/EF-2 subfamily.

Its subcellular location is the cytoplasm. Catalyzes the GTP-dependent ribosomal translocation step during translation elongation. During this step, the ribosome changes from the pre-translocational (PRE) to the post-translocational (POST) state as the newly formed A-site-bound peptidyl-tRNA and P-site-bound deacylated tRNA move to the P and E sites, respectively. Catalyzes the coordinated movement of the two tRNA molecules, the mRNA and conformational changes in the ribosome. This is Elongation factor G from Latilactobacillus sakei subsp. sakei (strain 23K) (Lactobacillus sakei subsp. sakei).